The following is a 191-amino-acid chain: MEGFFWKTLLVVGALTISGTSSFPHKPLTYEEAVDLAVSVYNSKSGEDSLYRLLEAVPALKWDALSESNQELNFSVKETVCQMAEERSLEECDFQEAGAVMGCTGYYFFGESPPVLVLTCKSVGNEEEQKQEEGNEEEKEVEKEEKEEDQKDQPKRVKRFKKFFKKLKNSVKKRAKKFFKKPKVIGVTFPF.

Residues 1 to 22 (MEGFFWKTLLVVGALTISGTSS) form the signal peptide. Residues 23-161 (FPHKPLTYEE…DQPKRVKRFK (139 aa)) constitute a propeptide that is removed on maturation. Intrachain disulfides connect cysteine 81–cysteine 92 and cysteine 103–cysteine 120. The disordered stretch occupies residues 126 to 154 (EEEQKQEEGNEEEKEVEKEEKEEDQKDQP). Over residues 140 to 154 (EVEKEEKEEDQKDQP) the composition is skewed to basic and acidic residues.

Belongs to the cathelicidin family. In terms of tissue distribution, expressed by the venom gland.

It is found in the secreted. Its subcellular location is the target cell membrane. In terms of biological role, potent antimicrobial peptide against most of Gram-negative bacteria, some Gram-positive bacteria (Bacillus) and some fungi. Adopts an amphipathic alpha helical conformation, that may allow to partition into the target membrane. No hemolytic and cytotoxic activities have been observed on mammalian cells. This chain is Cathelicidin-related antimicrobial peptide Na_CRAMP, found in Naja atra (Chinese cobra).